We begin with the raw amino-acid sequence, 968 residues long: RNA polymerase-associated protein RapA (968 aa).

One can recognise a Helicase ATP-binding domain in the interval 164–334 (DVGRRHAPRV…FARLRLLDPN (171 aa)). 177–184 (DEVGLGKT) serves as a coordination point for ATP. The DEAH box signature appears at 280–283 (DEAH). The 173-residue stretch at 490-662 (RVEWLMGYLT…YLASPDQTEG (173 aa)) folds into the Helicase C-terminal domain.

The protein belongs to the SNF2/RAD54 helicase family. RapA subfamily. Interacts with the RNAP. Has a higher affinity for the core RNAP than for the holoenzyme. Its ATPase activity is stimulated by binding to RNAP.

Its function is as follows. Transcription regulator that activates transcription by stimulating RNA polymerase (RNAP) recycling in case of stress conditions such as supercoiled DNA or high salt concentrations. Probably acts by releasing the RNAP, when it is trapped or immobilized on tightly supercoiled DNA. Does not activate transcription on linear DNA. Probably not involved in DNA repair. This is RNA polymerase-associated protein RapA from Escherichia fergusonii (strain ATCC 35469 / DSM 13698 / CCUG 18766 / IAM 14443 / JCM 21226 / LMG 7866 / NBRC 102419 / NCTC 12128 / CDC 0568-73).